A 426-amino-acid chain; its full sequence is Putative acid phosphatase 1 (426 aa).

An N-terminal signal peptide occupies residues 1 to 18 (MRVLFYVSILVIIASVHT). The Extracellular portion of the chain corresponds to 19–388 (QLISVHVIFR…SEWVMTPLSW (370 aa)). The active-site Nucleophile is the His-29. Asn-37 and Asn-145 each carry an N-linked (GlcNAc...) asparagine glycan. An intrachain disulfide couples Cys-133 to Cys-369. Asp-276 acts as the Proton donor in catalysis. Residues 389-409 (IIVAIAILLLIALILMTYFVI) traverse the membrane as a helical segment. Topologically, residues 410 to 426 (RYKNRSIVNIKKLSLEN) are cytoplasmic.

Belongs to the histidine acid phosphatase family.

The protein localises to the membrane. The enzyme catalyses a phosphate monoester + H2O = an alcohol + phosphate. In Caenorhabditis elegans, this protein is Putative acid phosphatase 1.